Here is a 578-residue protein sequence, read N- to C-terminus: Probable ATP-dependent RNA helicase DDX55 homolog (578 aa).

Positions 7 to 37 (PVALKTFREKLGPELLEVFDKSYKSFTDVQV) match the Q motif motif. One can recognise a Helicase ATP-binding domain in the interval 40-218 (GTHLLNLSDV…VFGLRNAKQV (179 aa)). Residue 53–60 (SPTGSGKT) participates in ATP binding. The DEAD box motif lies at 166–169 (DEAD). The Helicase C-terminal domain maps to 231 to 393 (TLKNYYVECR…EIKVPTNNSR (163 aa)). Positions 507-557 (AAKDKKRREKEARKLKKMGGRFRNGGGTGRKAEEKKALKRKAEEEDDAQND) are disordered. Basic residues predominate over residues 510–526 (DKKRREKEARKLKKMGG). A compositionally biased stretch (basic and acidic residues) spans 536–549 (RKAEEKKALKRKAE).

The protein belongs to the DEAD box helicase family. DDX55/SPB4 subfamily.

The catalysed reaction is ATP + H2O = ADP + phosphate + H(+). In terms of biological role, probable ATP-binding RNA helicase. The protein is Probable ATP-dependent RNA helicase DDX55 homolog of Caenorhabditis elegans.